We begin with the raw amino-acid sequence, 102 residues long: Aspartyl/glutamyl-tRNA(Asn/Gln) amidotransferase subunit C (102 aa).

This sequence belongs to the GatC family. Heterotrimer of A, B and C subunits.

It carries out the reaction L-glutamyl-tRNA(Gln) + L-glutamine + ATP + H2O = L-glutaminyl-tRNA(Gln) + L-glutamate + ADP + phosphate + H(+). It catalyses the reaction L-aspartyl-tRNA(Asn) + L-glutamine + ATP + H2O = L-asparaginyl-tRNA(Asn) + L-glutamate + ADP + phosphate + 2 H(+). Its function is as follows. Allows the formation of correctly charged Asn-tRNA(Asn) or Gln-tRNA(Gln) through the transamidation of misacylated Asp-tRNA(Asn) or Glu-tRNA(Gln) in organisms which lack either or both of asparaginyl-tRNA or glutaminyl-tRNA synthetases. The reaction takes place in the presence of glutamine and ATP through an activated phospho-Asp-tRNA(Asn) or phospho-Glu-tRNA(Gln). The sequence is that of Aspartyl/glutamyl-tRNA(Asn/Gln) amidotransferase subunit C from Mycobacteroides abscessus (strain ATCC 19977 / DSM 44196 / CCUG 20993 / CIP 104536 / JCM 13569 / NCTC 13031 / TMC 1543 / L948) (Mycobacterium abscessus).